The chain runs to 230 residues: Ribonuclease 3 (230 aa).

The RNase III domain maps to 5 to 125 (YSRLYKILGY…IIGAIYLDSD (121 aa)). Glu40 is a binding site for Mg(2+). Asp44 is an active-site residue. Residues Asp111 and Glu114 each coordinate Mg(2+). The active site involves Glu114. Residues 153–223 (DSKSKLQEIL…AEKMIQILSQ (71 aa)) form the DRBM domain.

The protein belongs to the ribonuclease III family. As to quaternary structure, homodimer. Requires Mg(2+) as cofactor.

The protein resides in the cytoplasm. It carries out the reaction Endonucleolytic cleavage to 5'-phosphomonoester.. Its function is as follows. Digests double-stranded RNA. Involved in the processing of primary rRNA transcript to yield the immediate precursors to the large and small rRNAs (23S and 16S). Processes some mRNAs, and tRNAs when they are encoded in the rRNA operon. Processes pre-crRNA and tracrRNA of type II CRISPR loci if present in the organism. This Francisella philomiragia subsp. philomiragia (strain ATCC 25017 / CCUG 19701 / FSC 153 / O#319-036) protein is Ribonuclease 3.